The following is a 156-amino-acid chain: Small ribosomal subunit protein uS7 (156 aa).

This sequence belongs to the universal ribosomal protein uS7 family. As to quaternary structure, part of the 30S ribosomal subunit. Contacts proteins S9 and S11.

In terms of biological role, one of the primary rRNA binding proteins, it binds directly to 16S rRNA where it nucleates assembly of the head domain of the 30S subunit. Is located at the subunit interface close to the decoding center, probably blocks exit of the E-site tRNA. The protein is Small ribosomal subunit protein uS7 of Pectobacterium carotovorum subsp. carotovorum (strain PC1).